The chain runs to 292 residues: Fat storage-inducing transmembrane protein 1 (292 aa).

The Lumenal portion of the chain corresponds to 1 to 18; the sequence is MERGPTVGAGLGAGTRVR. Residues 19–39 traverse the membrane as a helical segment; the sequence is ALLGCLVKVLLWVASALLYFG. Residues 40-54 lie on the Cytoplasmic side of the membrane; that stretch reads SEQAARLLGSPCLRR. Residues 55-75 traverse the membrane as a helical segment; the sequence is LYHAWLAAVVIFGPLLQFHVN. The Lumenal segment spans residues 76–94; sequence SRTIFASHGNFFNIKFVNS. The helical transmembrane segment at 95–115 threads the bilayer; the sequence is AWGWTCTFLGGFVLLVVFLAT. Topologically, residues 116-141 are cytoplasmic; the sequence is RRVAVTARHLSRLVVGAAVWRGAGRA. A helical transmembrane segment spans residues 142-162; sequence FLLIEDLTGSCFEPLPQGLLL. Residues 163–187 are Lumenal-facing; the sequence is HELPDRKSCLAAGHQWRGYTVSSHT. Residue His-186 is part of the active site. A helical membrane pass occupies residues 188–208; it reads FLLTFCCLLMAEEAAVFAKYL. The Cytoplasmic portion of the chain corresponds to 209–220; sequence AHGLPAGAPLRL. The chain crosses the membrane as a helical span at residues 221–241; it reads VFLLNVLLLGLWNFLLLCTVI. Over 242 to 249 the chain is Lumenal; it reads YFHQYTHK. Residue His-244 is part of the active site. Residues 250–270 form a helical membrane-spanning segment; sequence VVGAAVGTFAWYLTYGSWYHQ. Residues 271-292 lie on the Cytoplasmic side of the membrane; the sequence is PWSPGIPGHGLFPRSRSMRKHN.

The protein belongs to the FIT family. FIT1 subfamily. Predominantly expressed in skeletal muscle and at lower levels in the heart (at protein level). In the heart, mRNA expression levels do not correlate well with protein levels, suggesting post-transcriptional regulation in this organ.

The protein resides in the endoplasmic reticulum membrane. Plays an important role in the formation of lipid droplets (LDs) which are storage organelles at the center of lipid and energy homeostasis. Directly binds to diacylglycerol (DAGs) and triacylglycerol. The chain is Fat storage-inducing transmembrane protein 1 from Mus musculus (Mouse).